A 547-amino-acid chain; its full sequence is Sesterfisheric acid synthase (547 aa).

Residues 19-39 (IMGCSLGTGLLVSMIIYNYFF) traverse the membrane as a helical segment. 2 N-linked (GlcNAc...) asparagine glycosylation sites follow: asparagine 341 and asparagine 404. Residue cysteine 490 coordinates heme.

It belongs to the cytochrome P450 family. Requires heme as cofactor.

The protein localises to the membrane. It carries out the reaction sesterfisherol + 3 reduced [NADPH--hemoprotein reductase] + 3 O2 = sesterfisherate + 3 oxidized [NADPH--hemoprotein reductase] + 4 H2O + 4 H(+). It functions in the pathway secondary metabolite biosynthesis; terpenoid biosynthesis. Cytochrome P450 monooxygenase; part of the gene cluster that mediates the biosynthesis of sesterfisheric acid. The bifunctional terpene synthase NfSS converts DMAPP and IPP, and also GGPP, into sesterfisherol. The C-terminal prenyltransferase (PT) domain of NfSS catalyzes formation of GFPP, whereas the N-terminal terpene cyclase (TC) domain catalyzes the cyclization of GFPP to sesterfisherol. The cytochrome P450 monooxygenase NfP450 then catalyzes oxidative modifications of sesterfisherol into sesterfisheric acid. The protein is Sesterfisheric acid synthase of Neosartorya fischeri (strain ATCC 1020 / DSM 3700 / CBS 544.65 / FGSC A1164 / JCM 1740 / NRRL 181 / WB 181) (Aspergillus fischerianus).